The following is a 498-amino-acid chain: Trehalose-6-phosphate synthase (498 aa).

Arg28 contacts D-glucose 6-phosphate. A UDP-alpha-D-glucose-binding site is contributed by 48-49 (GG). Tyr106 and Asp160 together coordinate D-glucose 6-phosphate. 2 residues coordinate UDP-alpha-D-glucose: Arg302 and Lys307. Residue Arg340 participates in D-glucose 6-phosphate binding. Residue 405–409 (LVAKE) coordinates UDP-alpha-D-glucose.

It belongs to the glycosyltransferase 20 family. As to quaternary structure, homotetramer.

The enzyme catalyses ADP-alpha-D-glucose + D-glucose 6-phosphate = alpha,alpha-trehalose 6-phosphate + ADP + H(+). It catalyses the reaction CDP-alpha-D-glucose + D-glucose 6-phosphate = alpha,alpha-trehalose 6-phosphate + CDP + H(+). It carries out the reaction GDP-alpha-D-glucose + D-glucose 6-phosphate = alpha,alpha-trehalose 6-phosphate + GDP + H(+). The catalysed reaction is TDP-alpha-D-glucose + D-glucose 6-phosphate = 5-methyl-UDP + alpha,alpha-trehalose 6-phosphate + H(+). The enzyme catalyses D-glucose 6-phosphate + UDP-alpha-D-glucose = alpha,alpha-trehalose 6-phosphate + UDP + H(+). It functions in the pathway glycan biosynthesis; trehalose biosynthesis. Its function is as follows. Probably involved in the osmoprotection via the biosynthesis of trehalose and in the production of glycogen and alpha-glucan via the TreS-Pep2 branch involved in the biosynthesis of maltose-1-phosphate (M1P). Catalyzes the transfer of glucose from UDP-glucose (UDP-Glc) to D-glucose 6-phosphate (Glc-6-P) to form trehalose-6-phosphate. Probably also able to use ADP-Glc, CDP-Glc, GDP-Glc and TDP-Glc as glucosyl donors. This is Trehalose-6-phosphate synthase from Mycobacterium leprae (strain TN).